The chain runs to 217 residues: MNLAAIAKNYSMHNGESEAIVPYVPPPYNFASAPTFSQRTSQMESVSLGILNQAMSSTTGASGALKDEKAAFGAMAEALRDPEPIRQIKKQVGIRTLKNLKMELATMRRKKSALKIMIFISGCVTLATSMVGGLSIVDDEILRDYKNNDWLMKTIHGLNLLCTTVLLAAGKISDKIQEEISRTKRDIAKRESYVSAASMSWNGDTEMLLQGIKYGES.

It belongs to the orbivirus NS3 family.

May play a role in the release of virions from infected cells. The sequence is that of Non-structural protein NS3 (Segment-10) from African horse sickness virus 6 (AHSV-6).